The following is an 82-amino-acid chain: Beta-defensin 113 (82 aa).

Positions 1–16 are cleaved as a signal peptide; sequence MKILCIFLTFFFTVSC. 3 cysteine pairs are disulfide-bonded: Cys35-Cys61, Cys42-Cys56, and Cys46-Cys62.

This sequence belongs to the beta-defensin family.

It localises to the secreted. In terms of biological role, has antibacterial activity. The protein is Beta-defensin 113 (DEFB113) of Pan troglodytes (Chimpanzee).